A 191-amino-acid chain; its full sequence is Corticoliberin (191 aa).

Residues 1–24 (MRLPLLVSAGVLLVALLPCPPCRA) form the signal peptide. The propeptide occupies 25–148 (LLSRGPVLGA…RQEAPERERR (124 aa)). The interval 115–153 (PLPRRPLDSPSGPAERGAENALSSRQEAPERERRSEEPP) is disordered. The span at 141-151 (EAPERERRSEE) shows a compositional bias: basic and acidic residues. Ile189 is subject to Isoleucine amide.

Belongs to the sauvagine/corticotropin-releasing factor/urotensin I family. Interacts (via C-terminus) with CRFR1 (via N-terminal extracellular domain). As to expression, produced by the hypothalamus.

Its subcellular location is the secreted. Hormone regulating the release of corticotropin from pituitary gland. Induces NLRP6 in intestinal epithelial cells, hence may influence gut microbiota profile. This Sus scrofa (Pig) protein is Corticoliberin (CRH).